The following is a 1473-amino-acid chain: Actin cytoskeleton-regulatory complex protein pan1 (1473 aa).

2 disordered regions span residues 1–121 (MYSS…GLPV) and 134–153 (SFRG…AGSK). The segment covering 24–47 (QQPSYGQQTTQQQQQHQTGLAPQP) has biased composition (low complexity). Over residues 62–78 (LQPQPTGFSPGQLQSQM) the composition is skewed to polar residues. Residues 79 to 92 (TGFPQLQQQPGFQT) show a composition bias toward low complexity. A compositionally biased stretch (polar residues) spans 93–118 (SAQPPQLTGYSIQSQAPQLQVPSSTG). The region spanning 166–254 (DQAKFEQLFK…EKIKNEVSSM (89 aa)) is the EH 1 domain. Residues 198-233 (LPGSDLSKIWVLSDTTKSGQLFFPEFALAMYLCNIR) enclose the EF-hand 1 domain. A disordered region spans residues 266–366 (QPEMAFPTNA…PTGLMSNPQP (101 aa)). The span at 289–298 (PPAPQQPQPQ) shows a compositional bias: pro residues. The span at 301–339 (THSQLLTQLTAQPTGFHTQPTGIQSTQASFPGQSSSLVP) shows a compositional bias: polar residues. The span at 344-360 (FPGQSQQQFLQTQPTGL) shows a compositional bias: low complexity. One can recognise an EH 2 domain in the interval 458 to 547 (EKKIYDDLFR…PELVPPSTRN (90 aa)). The region spanning 491–526 (LDQKDLERIWTLADPHNRGRLNMDEFAVAMHLIYRK) is the EF-hand 2 domain. The segment at 609–645 (NDEAASGYRSSARRRVGNNGRTPSPATSQTSEEELSV) is disordered. A compositionally biased stretch (polar residues) spans 627–638 (NGRTPSPATSQT). Residues 678–759 (RRDRREVESL…LFRLKDAKAH (82 aa)) are a coiled coil. Disordered regions lie at residues 793–837 (AAEL…RDVE), 891–1265 (AYVR…ADVQ), and 1277–1473 (QENA…RVLD). Basic and acidic residues-rich tracts occupy residues 810-837 (AAAR…RDVE) and 893-915 (VRKE…DEAP). Residues 925–934 (TGSTGSLPGS) show a composition bias toward low complexity. Composition is skewed to basic and acidic residues over residues 935-953 (THED…RIAE), 973-1005 (RQER…RLAE), 1054-1097 (AARE…RLRA), 1108-1128 (KKQE…EQEA), and 1135-1147 (AELE…ERQL). The stretch at 963 to 1163 (HNNTAETLLQ…LDEESSSDEE (201 aa)) forms a coiled coil. The span at 1152–1165 (EALDEESSSDEEGP) shows a compositional bias: acidic residues. Polar residues-rich tracts occupy residues 1168 to 1180 (ITPQ…QSQI) and 1208 to 1218 (TSATSSPTSDR). Over residues 1402–1434 (PDAPPPPPPPPVPHMAPSAPPPGIPPPPAPPAA) the composition is skewed to pro residues. The WH2 domain occupies 1440 to 1457 (NRSALLASIQAGKGLRKV).

The protein belongs to the PAN1 family. Component of the PAN1 actin cytoskeleton-regulatory complex.

It localises to the cell membrane. It is found in the endosome membrane. The protein localises to the cytoplasm. Its subcellular location is the cytoskeleton. The protein resides in the actin patch. In terms of biological role, component of the PAN1 actin cytoskeleton-regulatory complex required for the internalization of endosomes during actin-coupled endocytosis. The complex links the site of endocytosis to the cell membrane-associated actin cytoskeleton. Mediates uptake of external molecules and vacuolar degradation of plasma membrane proteins. Plays a role in the proper organization of the cell membrane-associated actin cytoskeleton and promotes its destabilization. The sequence is that of Actin cytoskeleton-regulatory complex protein pan1 (pan1) from Aspergillus oryzae (strain ATCC 42149 / RIB 40) (Yellow koji mold).